The following is a 207-amino-acid chain: ATP-dependent Clp protease proteolytic subunit (207 aa).

The Nucleophile role is filled by Ser-111. His-136 is a catalytic residue.

It belongs to the peptidase S14 family. As to quaternary structure, fourteen ClpP subunits assemble into 2 heptameric rings which stack back to back to give a disk-like structure with a central cavity, resembling the structure of eukaryotic proteasomes.

It localises to the cytoplasm. The catalysed reaction is Hydrolysis of proteins to small peptides in the presence of ATP and magnesium. alpha-casein is the usual test substrate. In the absence of ATP, only oligopeptides shorter than five residues are hydrolyzed (such as succinyl-Leu-Tyr-|-NHMec, and Leu-Tyr-Leu-|-Tyr-Trp, in which cleavage of the -Tyr-|-Leu- and -Tyr-|-Trp bonds also occurs).. Functionally, cleaves peptides in various proteins in a process that requires ATP hydrolysis. Has a chymotrypsin-like activity. Plays a major role in the degradation of misfolded proteins. The sequence is that of ATP-dependent Clp protease proteolytic subunit from Burkholderia mallei (strain ATCC 23344).